An 89-amino-acid chain; its full sequence is Otospiralin (89 aa).

A signal peptide spans 1-21 (MQPCVLWWLALGLLLGIPAGA).

This sequence belongs to the otospiralin family. In terms of tissue distribution, ear specific. Expressed in the cochlea and vestibule, but not in the cochlear nerve, cochlear nucleus, spinal chord, muscle, cerebral cortex, cerebellum, diencephalon and olfactory bulb. In the cochlea, expressed in fibrocytes of the spiral limbus, spiral ligament and suprastrial zone. In the vestibule, expressed in cells located to the stroma below the macular and crista sensory epithelia and in the subepithelial layer of the walls of semicircular canals and maculae.

It localises to the secreted. May be essential for the survival of the neurosensory epithelium of the inner ear. This chain is Otospiralin (Otos), found in Rattus norvegicus (Rat).